Here is a 115-residue protein sequence, read N- to C-terminus: Holo-[acyl-carrier-protein] synthase (115 aa).

2 residues coordinate Mg(2+): Asp-6 and Glu-51.

This sequence belongs to the P-Pant transferase superfamily. AcpS family. Mg(2+) is required as a cofactor.

The protein resides in the cytoplasm. The catalysed reaction is apo-[ACP] + CoA = holo-[ACP] + adenosine 3',5'-bisphosphate + H(+). In terms of biological role, transfers the 4'-phosphopantetheine moiety from coenzyme A to a Ser of acyl-carrier-protein. The sequence is that of Holo-[acyl-carrier-protein] synthase from Campylobacter jejuni subsp. jejuni serotype O:6 (strain 81116 / NCTC 11828).